Reading from the N-terminus, the 84-residue chain is Sporulation-specific transcription factor SpoVIF (84 aa).

The protein localises to the cytoplasm. In terms of biological role, transcription factor involved in spore coat assembly and spore resistance. Required for gene regulation during the latter stages of sporulation. Regulates the transcription of at least cgeA, cotG and cotS. May directly or indirectly control the function of the GerE protein. The protein is Sporulation-specific transcription factor SpoVIF of Bacillus subtilis (strain 168).